A 153-amino-acid polypeptide reads, in one-letter code: Aspartate carbamoyltransferase regulatory chain (153 aa).

4 residues coordinate Zn(2+): cysteine 109, cysteine 114, cysteine 138, and cysteine 141.

This sequence belongs to the PyrI family. Contains catalytic and regulatory chains. The cofactor is Zn(2+).

In terms of biological role, involved in allosteric regulation of aspartate carbamoyltransferase. In Cronobacter sakazakii (strain ATCC BAA-894) (Enterobacter sakazakii), this protein is Aspartate carbamoyltransferase regulatory chain.